The sequence spans 467 residues: ATP-dependent protease ATPase subunit HslU (467 aa).

Residues Val22 and 64 to 69 each bind ATP; that span reads GVGKTE. Residues 166–185 form a disordered region; that stretch reads GQNQDEEEEPPTEEIKTKRS. ATP-binding residues include Asp280, Glu345, and Arg417.

The protein belongs to the ClpX chaperone family. HslU subfamily. In terms of assembly, a double ring-shaped homohexamer of HslV is capped on each side by a ring-shaped HslU homohexamer. The assembly of the HslU/HslV complex is dependent on binding of ATP.

The protein resides in the cytoplasm. In terms of biological role, ATPase subunit of a proteasome-like degradation complex; this subunit has chaperone activity. The binding of ATP and its subsequent hydrolysis by HslU are essential for unfolding of protein substrates subsequently hydrolyzed by HslV. HslU recognizes the N-terminal part of its protein substrates and unfolds these before they are guided to HslV for hydrolysis. The polypeptide is ATP-dependent protease ATPase subunit HslU (Staphylococcus epidermidis (strain ATCC 35984 / DSM 28319 / BCRC 17069 / CCUG 31568 / BM 3577 / RP62A)).